The sequence spans 163 residues: Nucleotide-binding protein YajQ (163 aa).

Belongs to the YajQ family.

Its function is as follows. Nucleotide-binding protein. The sequence is that of Nucleotide-binding protein YajQ from Salmonella typhi.